The sequence spans 258 residues: Acyl-[acyl-carrier-protein]--UDP-N-acetylglucosamine O-acyltransferase (258 aa).

This sequence belongs to the transferase hexapeptide repeat family. LpxA subfamily. Homotrimer.

It is found in the cytoplasm. It carries out the reaction a (3R)-hydroxyacyl-[ACP] + UDP-N-acetyl-alpha-D-glucosamine = a UDP-3-O-[(3R)-3-hydroxyacyl]-N-acetyl-alpha-D-glucosamine + holo-[ACP]. The protein operates within glycolipid biosynthesis; lipid IV(A) biosynthesis; lipid IV(A) from (3R)-3-hydroxytetradecanoyl-[acyl-carrier-protein] and UDP-N-acetyl-alpha-D-glucosamine: step 1/6. Its function is as follows. Involved in the biosynthesis of lipid A, a phosphorylated glycolipid that anchors the lipopolysaccharide to the outer membrane of the cell. The protein is Acyl-[acyl-carrier-protein]--UDP-N-acetylglucosamine O-acyltransferase of Pseudomonas putida (strain GB-1).